We begin with the raw amino-acid sequence, 1158 residues long: Hephaestin (1158 aa).

The N-terminal stretch at 1 to 23 is a signal peptide; it reads MESGHLLWALLFMQSLWPQLTDG. Plastocyanin-like domains are found at residues 24-206, 218-366, 370-560, 570-718, 731-903, and 911-1067; these read ATRV…LITC, QRQD…VKSC, PPVD…LLVC, KQKG…VSQC, AARI…LAIC, and HGGR…SRTE. Over 24 to 1110 the chain is Extracellular; it reads ATRVYYLGIR…PIKNVEMLAS (1087 aa). The Na(+) site is built by glycine 70 and tyrosine 73. The Cu(2+) site is built by histidine 126 and histidine 128. O2 is bound at residue histidine 126. Lysine 134, aspartate 152, and aspartate 153 together coordinate Ca(2+). A glycan (N-linked (GlcNAc...) asparagine) is linked at asparagine 164. Cysteines 180 and 206 form a disulfide. Residues histidine 186 and histidine 188 each contribute to the Cu(2+) site. Histidine 186 lines the O2 pocket. Residue asparagine 236 is glycosylated (N-linked (GlcNAc...) asparagine). Serine 265 lines the Na(+) pocket. Residues cysteine 285 and cysteine 366 are joined by a disulfide bond. Residues histidine 304, cysteine 347, and histidine 352 each contribute to the Cu(2+) site. Phenylalanine 416, glycine 425, and tyrosine 428 together coordinate Na(+). Cysteine 534 and cysteine 560 are oxidised to a cystine. N-linked (GlcNAc...) asparagine glycosylation occurs at asparagine 588. Position 617 (serine 617) interacts with Na(+). An intrachain disulfide couples cysteine 637 to cysteine 718. Histidine 656, cysteine 699, histidine 704, and methionine 709 together coordinate Cu(2+). 2 N-linked (GlcNAc...) asparagine glycosylation sites follow: asparagine 714 and asparagine 758. Na(+)-binding residues include phenylalanine 769 and glycine 778. 2 N-linked (GlcNAc...) asparagine glycosylation sites follow: asparagine 829 and asparagine 873. Cysteine 877 and cysteine 903 are oxidised to a cystine. An N-linked (GlcNAc...) asparagine glycan is attached at asparagine 931. Residues histidine 1000, histidine 1003, histidine 1005, histidine 1045, cysteine 1046, histidine 1047, histidine 1051, and methionine 1056 each coordinate Cu(2+). Positions 1003 and 1005 each coordinate O2. Histidine 1047 provides a ligand contact to O2. The chain crosses the membrane as a helical span at residues 1111-1131; the sequence is VLVAISVTLLLVVLALGGVVW. Topologically, residues 1132–1158 are cytoplasmic; sequence YQHRQRKLRRNRRSILDDSFKLLSFKQ. Serine 1145, serine 1150, and serine 1155 each carry phosphoserine.

Belongs to the multicopper oxidase family. As to quaternary structure, part of a complex composed of SLC40A1/ferroportin, TF/transferrin and HEPH/hephaestin that transfers iron from cells to transferrin. It depends on Cu cation as a cofactor. As to expression, expressed by intestinal absorptive cells (at protein level). Also detected in breast, colon, bone trabecular cells and fibroblasts.

Its subcellular location is the basolateral cell membrane. The enzyme catalyses 4 Fe(2+) + O2 + 4 H(+) = 4 Fe(3+) + 2 H2O. Plasma membrane ferroxidase that mediates the extracellular conversion of ferrous/Fe(2+) iron into its ferric/Fe(3+) form. Couples ferroportin which specifically exports ferrous/Fe(2+) iron from cells to transferrin that only binds and shuttles extracellular ferric/Fe(3+) iron throughout the body. By helping iron transfer from cells to blood mainly contributes to dietary iron absorption by the intestinal epithelium and more generally regulates iron levels in the body. The polypeptide is Hephaestin (Homo sapiens (Human)).